An 85-amino-acid chain; its full sequence is Small ribosomal subunit protein uS15 (85 aa).

This sequence belongs to the universal ribosomal protein uS15 family. In terms of assembly, part of the 30S ribosomal subunit. Forms a bridge to the 50S subunit in the 70S ribosome, contacting the 23S rRNA.

Its function is as follows. One of the primary rRNA binding proteins, it binds directly to 16S rRNA where it helps nucleate assembly of the platform of the 30S subunit by binding and bridging several RNA helices of the 16S rRNA. Functionally, forms an intersubunit bridge (bridge B4) with the 23S rRNA of the 50S subunit in the ribosome. In Fusobacterium nucleatum subsp. nucleatum (strain ATCC 25586 / DSM 15643 / BCRC 10681 / CIP 101130 / JCM 8532 / KCTC 2640 / LMG 13131 / VPI 4355), this protein is Small ribosomal subunit protein uS15.